A 422-amino-acid polypeptide reads, in one-letter code: Glutamyl-tRNA reductase (422 aa).

Residues 48-51, serine 100, 105-107, and glutamine 111 contribute to the substrate site; these read TCNR and EDQ. The active-site Nucleophile is cysteine 49. 180–185 is a binding site for NADP(+); it reads GTGEMG.

This sequence belongs to the glutamyl-tRNA reductase family. As to quaternary structure, homodimer.

It carries out the reaction (S)-4-amino-5-oxopentanoate + tRNA(Glu) + NADP(+) = L-glutamyl-tRNA(Glu) + NADPH + H(+). It functions in the pathway porphyrin-containing compound metabolism; protoporphyrin-IX biosynthesis; 5-aminolevulinate from L-glutamyl-tRNA(Glu): step 1/2. In terms of biological role, catalyzes the NADPH-dependent reduction of glutamyl-tRNA(Glu) to glutamate 1-semialdehyde (GSA). The sequence is that of Glutamyl-tRNA reductase from Methanococcoides burtonii (strain DSM 6242 / NBRC 107633 / OCM 468 / ACE-M).